The following is a 330-amino-acid chain: GMP reductase (330 aa).

Cys-180 serves as the catalytic Thioimidate intermediate. NADP(+) is bound at residue 209–232; sequence LIADGGIRHNGDIAKSVRFGASMV.

It belongs to the IMPDH/GMPR family. GuaC type 2 subfamily.

It catalyses the reaction IMP + NH4(+) + NADP(+) = GMP + NADPH + 2 H(+). Its function is as follows. Catalyzes the irreversible NADPH-dependent deamination of GMP to IMP. It functions in the conversion of nucleobase, nucleoside and nucleotide derivatives of G to A nucleotides, and in maintaining the intracellular balance of A and G nucleotides. The protein is GMP reductase of Lactobacillus delbrueckii subsp. bulgaricus (strain ATCC 11842 / DSM 20081 / BCRC 10696 / JCM 1002 / NBRC 13953 / NCIMB 11778 / NCTC 12712 / WDCM 00102 / Lb 14).